The following is a 94-amino-acid chain: Cell division protein CrgA (94 aa).

A run of 2 helical transmembrane segments spans residues V31–F51 and L71–M91.

This sequence belongs to the CrgA family.

The protein resides in the cell membrane. Its function is as follows. Involved in cell division. The sequence is that of Cell division protein CrgA from Mycobacterium sp. (strain JLS).